A 252-amino-acid chain; its full sequence is Ditrans,polycis-undecaprenyl-diphosphate synthase ((2E,6E)-farnesyl-diphosphate specific) (252 aa).

D25 is an active-site residue. Mg(2+) is bound at residue D25. Substrate contacts are provided by residues 26 to 29 (GNGR), W30, R38, H42, and 70 to 72 (SSE). Residue N73 is the Proton acceptor of the active site. 3 residues coordinate substrate: W74, R76, and R193. H198 contributes to the Mg(2+) binding site. 199–201 (RIS) serves as a coordination point for substrate. Position 212 (E212) interacts with Mg(2+).

This sequence belongs to the UPP synthase family. Homodimer. The cofactor is Mg(2+).

It carries out the reaction 8 isopentenyl diphosphate + (2E,6E)-farnesyl diphosphate = di-trans,octa-cis-undecaprenyl diphosphate + 8 diphosphate. Catalyzes the sequential condensation of isopentenyl diphosphate (IPP) with (2E,6E)-farnesyl diphosphate (E,E-FPP) to yield (2Z,6Z,10Z,14Z,18Z,22Z,26Z,30Z,34E,38E)-undecaprenyl diphosphate (di-trans,octa-cis-UPP). UPP is the precursor of glycosyl carrier lipid in the biosynthesis of bacterial cell wall polysaccharide components such as peptidoglycan and lipopolysaccharide. In Salmonella typhi, this protein is Ditrans,polycis-undecaprenyl-diphosphate synthase ((2E,6E)-farnesyl-diphosphate specific).